The following is a 732-amino-acid chain: S-adenosyl-L-methionine-dependent tRNA 4-demethylwyosine synthase TYW1 (732 aa).

The 159-residue stretch at 79–237 (VKIFYGSQTG…DFRAWKTKFI (159 aa)) folds into the Flavodoxin-like domain. Residues 85-89 (SQTGT) and 176-208 (VFGL…HRVM) each bind FMN. The segment at 248–312 (RKKSCGGHCK…KDHQSLNSIV (65 aa)) is disordered. Positions 259–286 (GKCESHQRGSEEREEGSHEQDELHHRDT) are enriched in basic and acidic residues. Positions 287–299 (EEEEPFESSSEEE) are enriched in acidic residues. The Radical SAM core domain maps to 400-644 (YGIESHRCME…VDLIPDYEIA (245 aa)). [4Fe-4S] cluster is bound by residues C416, C420, and C423.

This sequence belongs to the TYW1 family. Requires [4Fe-4S] cluster as cofactor.

The enzyme catalyses N(1)-methylguanosine(37) in tRNA(Phe) + pyruvate + S-adenosyl-L-methionine = 4-demethylwyosine(37) in tRNA(Phe) + 5'-deoxyadenosine + L-methionine + CO2 + H2O. Its pathway is tRNA modification; wybutosine-tRNA(Phe) biosynthesis. In terms of biological role, probable component of the wybutosine biosynthesis pathway. Wybutosine is a hyper modified guanosine with a tricyclic base found at the 3'-position adjacent to the anticodon of eukaryotic phenylalanine tRNA. Catalyzes the condensation of N-methylguanine with 2 carbon atoms from pyruvate to form the tricyclic 4-demethylwyosine, an intermediate in wybutosine biosynthesis. The polypeptide is S-adenosyl-L-methionine-dependent tRNA 4-demethylwyosine synthase TYW1 (TYW1) (Pongo abelii (Sumatran orangutan)).